The sequence spans 166 residues: Regulator of ribonuclease activity A (166 aa).

It belongs to the RraA family. Homotrimer. Binds to both RNA-binding sites in the C-terminal region of Rne and to RhlB.

The protein resides in the cytoplasm. Globally modulates RNA abundance by binding to RNase E (Rne) and regulating its endonucleolytic activity. Can modulate Rne action in a substrate-dependent manner by altering the composition of the degradosome. Modulates RNA-binding and helicase activities of the degradosome. This is Regulator of ribonuclease activity A from Glaesserella parasuis serovar 5 (strain SH0165) (Haemophilus parasuis).